The following is a 215-amino-acid chain: Fibrillarin-like rRNA/tRNA 2'-O-methyltransferase (215 aa).

The disordered stretch occupies residues 1–29 (MKASSSLPDGVQRRQFDNRSRLTTHGTTV). Positions 11–20 (VQRRQFDNRS) are enriched in basic and acidic residues. S-adenosyl-L-methionine is bound by residues 76–77 (TT), 92–93 (EF), 117–118 (DA), and 138–141 (DVAT).

It belongs to the methyltransferase superfamily. Fibrillarin family. As to quaternary structure, interacts with nop5. Component of box C/D small ribonucleoprotein (sRNP) particles that contain rpl7ae, FlpA and nop5, plus a guide RNA.

Its function is as follows. Involved in pre-rRNA and tRNA processing. Utilizes the methyl donor S-adenosyl-L-methionine to catalyze the site-specific 2'-hydroxyl methylation of ribose moieties in rRNA and tRNA. Site specificity is provided by a guide RNA that base pairs with the substrate. Methylation occurs at a characteristic distance from the sequence involved in base pairing with the guide RNA. This chain is Fibrillarin-like rRNA/tRNA 2'-O-methyltransferase, found in Haloquadratum walsbyi (strain DSM 16790 / HBSQ001).